Consider the following 569-residue polypeptide: Peptide transporter PTR_C (569 aa).

Basic and acidic residues predominate over residues 1–25; sequence MSQNVDEKVVHDDASVIRSVDRSES. A disordered region spans residues 1-43; sequence MSQNVDEKVVHDDASVIRSVDRSESDSYPDSVSPEGAEPSEEE. A helical transmembrane segment spans residues 54–74; sequence VPLACWLVAIVELAERFSYYG. N-linked (GlcNAc...) asparagine glycosylation is present at Asn-98. 3 helical membrane-spanning segments follow: residues 104-124, 134-154, and 159-179; these read ALSY…AWVA, ISIF…TSLP, and NTSL…TGGV. An N-linked (GlcNAc...) asparagine glycan is attached at Asn-212. 8 helical membrane-spanning segments follow: residues 215–235, 245–265, 322–342, 366–386, 398–418, 444–464, 479–499, and 510–530; these read IQNV…SVIA, FWAA…ALFL, ALYA…YGQM, IDSI…YPFI, IFWG…LQHF, VALQ…ASIT, SFIM…GIAL, and WTYT…WFLF.

This sequence belongs to the major facilitator superfamily. Proton-dependent oligopeptide transporter (POT/PTR) (TC 2.A.17) family.

It is found in the cell membrane. It catalyses the reaction a dipeptide(out) + H(+)(out) = a dipeptide(in) + H(+)(in). It carries out the reaction an L-amino acid tripeptide(out) + H(+)(out) = an L-amino acid tripeptide(in) + H(+)(in). In terms of biological role, peptide transporter that exploits the inwardly directed proton motive force to facilitate the cellular uptake of di/tripeptides. Shows strong uptake specificity towards the dipeptides Tyr-Phe and Leu-Gly and the tripeptide Phe-Gly-Gly, when compared to PTR_A and PTR_B. Also able to import peptide-based antifungals such as the peptide-nucleoside drug nikkomycin Z as well as the glucosamine-6-phosphate synthase inhibitor, L-norvalyl-N3-(4-methoxyfumaroyl)-L-2,3-diaminopropionoic acid (Nva-FMDP). In Candidozyma auris (Yeast), this protein is Peptide transporter PTR_C.